The chain runs to 254 residues: HLA class II histocompatibility antigen, DQ alpha 1 chain (254 aa).

The first 23 residues, 1–23 (MILNKALMLGALALTTVMSPCGG), serve as a signal peptide directing secretion. The segment at 24–119 (EDIVADHVAS…EVPEVTVFSK (96 aa)) is alpha-1. Residues 24–216 (EDIVADHVAS…IPAPMSELTE (193 aa)) are Extracellular-facing. N-linked (GlcNAc...) asparagine glycans are attached at residues asparagine 103 and asparagine 143. The Ig-like C1-type domain maps to 112 to 204 (PEVTVFSKSP…LDKPLLKHWE (93 aa)). The tract at residues 120 to 203 (SPVTLGQPNI…GLDKPLLKHW (84 aa)) is alpha-2. Cysteine 132 and cysteine 188 are oxidised to a cystine. Residues 204 to 216 (EPEIPAPMSELTE) form a connecting peptide region. The helical transmembrane segment at 217 to 239 (TVVCALGLSVGLVGIVVGTVFII) threads the bilayer. Residues 240 to 254 (RGLRSVGASRHQGPL) lie on the Cytoplasmic side of the membrane.

The protein belongs to the MHC class II family. In terms of assembly, heterodimer of an alpha and a beta subunit; also referred as MHC class II molecule. In the endoplasmic reticulum (ER) it forms a heterononamer; 3 MHC class II molecules bind to a CD74 homotrimer (also known as invariant chain or HLA class II histocompatibility antigen gamma chain). In the endosomal/lysosomal system; CD74 undergoes sequential degradation by various proteases; leaving a small fragment termed CLIP on each MHC class II molecule. MHC class II molecule interacts with HLA_DM, and HLA_DO in B-cells, in order to release CLIP and facilitate the binding of antigenic peptides.

Its subcellular location is the cell membrane. It localises to the endoplasmic reticulum membrane. It is found in the golgi apparatus. The protein localises to the trans-Golgi network membrane. The protein resides in the endosome membrane. Its subcellular location is the lysosome membrane. In terms of biological role, binds peptides derived from antigens that access the endocytic route of antigen presenting cells (APC) and presents them on the cell surface for recognition by the CD4 T-cells. The peptide binding cleft accommodates peptides of 10-30 residues. The peptides presented by MHC class II molecules are generated mostly by degradation of proteins that access the endocytic route, where they are processed by lysosomal proteases and other hydrolases. Exogenous antigens that have been endocytosed by the APC are thus readily available for presentation via MHC II molecules, and for this reason this antigen presentation pathway is usually referred to as exogenous. As membrane proteins on their way to degradation in lysosomes as part of their normal turn-over are also contained in the endosomal/lysosomal compartments, exogenous antigens must compete with those derived from endogenous components. Autophagy is also a source of endogenous peptides, autophagosomes constitutively fuse with MHC class II loading compartments. In addition to APCs, other cells of the gastrointestinal tract, such as epithelial cells, express MHC class II molecules and CD74 and act as APCs, which is an unusual trait of the GI tract. To produce a MHC class II molecule that presents an antigen, three MHC class II molecules (heterodimers of an alpha and a beta chain) associate with a CD74 trimer in the ER to form a heterononamer. Soon after the entry of this complex into the endosomal/lysosomal system where antigen processing occurs, CD74 undergoes a sequential degradation by various proteases, including CTSS and CTSL, leaving a small fragment termed CLIP (class-II-associated invariant chain peptide). The removal of CLIP is facilitated by HLA-DM via direct binding to the alpha-beta-CLIP complex so that CLIP is released. HLA-DM stabilizes MHC class II molecules until primary high affinity antigenic peptides are bound. The MHC II molecule bound to a peptide is then transported to the cell membrane surface. In B-cells, the interaction between HLA-DM and MHC class II molecules is regulated by HLA-DO. Primary dendritic cells (DCs) also to express HLA-DO. Lysosomal microenvironment has been implicated in the regulation of antigen loading into MHC II molecules, increased acidification produces increased proteolysis and efficient peptide loading. The protein is HLA class II histocompatibility antigen, DQ alpha 1 chain (HLA-DQA1) of Homo sapiens (Human).